Here is a 141-residue protein sequence, read N- to C-terminus: Nucleoside diphosphate kinase (141 aa).

ATP contacts are provided by Lys11, Phe59, Arg87, Thr93, Arg104, and Asn114. His117 acts as the Pros-phosphohistidine intermediate in catalysis.

It belongs to the NDK family. As to quaternary structure, homotetramer. Mg(2+) serves as cofactor.

It localises to the cytoplasm. The enzyme catalyses a 2'-deoxyribonucleoside 5'-diphosphate + ATP = a 2'-deoxyribonucleoside 5'-triphosphate + ADP. The catalysed reaction is a ribonucleoside 5'-diphosphate + ATP = a ribonucleoside 5'-triphosphate + ADP. In terms of biological role, major role in the synthesis of nucleoside triphosphates other than ATP. The ATP gamma phosphate is transferred to the NDP beta phosphate via a ping-pong mechanism, using a phosphorylated active-site intermediate. This Histophilus somni (strain 2336) (Haemophilus somnus) protein is Nucleoside diphosphate kinase.